We begin with the raw amino-acid sequence, 140 residues long: Transmembrane protein 107 (140 aa).

A run of 2 helical transmembrane segments spans residues 7 to 27 (LVPSRFLTLLAHLVVVITLFW) and 53 to 73 (LVAALCLTLGLFAVELAGFLS). N79 carries N-linked (GlcNAc...) asparagine glycosylation. The next 2 membrane-spanning stretches (helical) occupy residues 83-103 (SLLSIAAHCSASVALSFFVFE) and 113-133 (IFTFCSAFPAVTETALFIAVF).

Part of the tectonic-like complex (also named B9 complex). Interacts with TMEM237, TMEM231, MKS1 and TMEM216.

The protein localises to the membrane. Its subcellular location is the cell projection. It is found in the cilium. Plays a role in cilia formation and embryonic patterning. Requires for normal Sonic hedgehog (Shh) signaling in the neural tube and acts in combination with GLI2 and GLI3 to pattern ventral and intermediate neuronal cell types. During ciliogenesis regulates the ciliary transition zone localization of some MKS complex proteins. The chain is Transmembrane protein 107 from Mus musculus (Mouse).